A 327-amino-acid chain; its full sequence is Glutaminase 1 (327 aa).

Positions 74, 126, 170, 177, 201, 253, and 271 each coordinate substrate.

This sequence belongs to the glutaminase family. Homotetramer.

It carries out the reaction L-glutamine + H2O = L-glutamate + NH4(+). In Bacillus subtilis (strain 168), this protein is Glutaminase 1 (glsA1).